Reading from the N-terminus, the 426-residue chain is Histidine--tRNA ligase (426 aa).

It belongs to the class-II aminoacyl-tRNA synthetase family. In terms of assembly, homodimer.

It localises to the cytoplasm. The enzyme catalyses tRNA(His) + L-histidine + ATP = L-histidyl-tRNA(His) + AMP + diphosphate + H(+). In Chlorobium phaeovibrioides (strain DSM 265 / 1930) (Prosthecochloris vibrioformis (strain DSM 265)), this protein is Histidine--tRNA ligase.